Here is a 372-residue protein sequence, read N- to C-terminus: 2,7-anhydro-N-acetylneuraminate hydratase (372 aa).

The NAD(+) site is built by Tyr-11, Phe-12, Asp-33, Asn-36, Thr-68, Asn-70, His-73, Glu-90, Lys-91, and Trp-160.

This sequence belongs to the Gfo/Idh/MocA family. As to quaternary structure, homodimer. It depends on NAD(+) as a cofactor.

The catalysed reaction is N-acetyl-2,7-anhydro-alpha-neuraminate + H2O = N-acetyl-alpha-neuraminate. The enzyme catalyses 2-deoxy-2,3-dehydro-N-acetylneuraminate + H2O = N-acetyl-alpha-neuraminate. With respect to regulation, all conversions require NAD(+) as a cofactor, which is regenerated in the reaction. The presence of EGTA and several divalent cations does not affect the activity. Its function is as follows. Hydratase involved in the degradation of sialic acids. Catalyzes the reversible conversion of the dehydrated form of N-acetylneuraminate (Neu5Ac), 2,7-anhydro-N-acetylneuraminate (2,7-AN), to Neu5Ac. Also catalyzes the irreversible conversion of 2-deoxy-2,3-didehydro-N-acetylneuraminate (2,3-EN) to Neu5Ac. The reaction mechanism involves keto intermediates and the transient formation of NADH. This chain is 2,7-anhydro-N-acetylneuraminate hydratase, found in Escherichia coli (strain K12).